The primary structure comprises 152 residues: MADSERLSAPGCWAACTNFSRTRKGILLFAEIILCLVILICFSASTPGYSSLSVIEMILAAIFFVVYMCDLHTKIPFINWPWSDFFRTLIAAILYLITSIVVLVERGNHSKIVAGVLGLIATCLFGYDAYVTFPVRQPRHTAAPTDPADGPV.

N-linked (GlcNAc...) asparagine glycosylation occurs at asparagine 18. Positions 19-137 (FSRTRKGILL…DAYVTFPVRQ (119 aa)) constitute an MARVEL domain. A run of 3 helical transmembrane segments spans residues 25-45 (GILL…FSAS), 48-68 (GYSS…VVYM), and 85-105 (FFRT…VLVE). Asparagine 108 is a glycosylation site (N-linked (GlcNAc...) asparagine). Residues 112–132 (IVAGVLGLIATCLFGYDAYVT) traverse the membrane as a helical segment.

As to expression, enriched in colonic mucosa. The expression of A4 follows a gradient along the crypto-villus axis with the most abundant message occurring in the lower half of the crypt.

The protein localises to the membrane. Its function is as follows. May play a role in cell differentiation in the intestinal epithelium. The polypeptide is Proteolipid protein 2 (PLP2) (Homo sapiens (Human)).